The following is a 179-amino-acid chain: MLGSQTKQVILGIDPGTATMGWGVVRQEGSRLRYVQHGAITTPSGWGMPRRLDRLFAGVTELIRGYRPSAVAVEELFFNTNVTTAITVGQARGVALLAAYRAGVEVFEYTPLQVKQAITSYGRADKRQVQEMVRALLGLRSIPRPDDAADGLAIAICHAFSHRMSAATGVGKPRAMQDN.

Catalysis depends on residues aspartate 14, glutamate 74, and aspartate 147. Residues aspartate 14, glutamate 74, and aspartate 147 each coordinate Mg(2+).

It belongs to the RuvC family. Homodimer which binds Holliday junction (HJ) DNA. The HJ becomes 2-fold symmetrical on binding to RuvC with unstacked arms; it has a different conformation from HJ DNA in complex with RuvA. In the full resolvosome a probable DNA-RuvA(4)-RuvB(12)-RuvC(2) complex forms which resolves the HJ. Requires Mg(2+) as cofactor.

Its subcellular location is the cytoplasm. It catalyses the reaction Endonucleolytic cleavage at a junction such as a reciprocal single-stranded crossover between two homologous DNA duplexes (Holliday junction).. The RuvA-RuvB-RuvC complex processes Holliday junction (HJ) DNA during genetic recombination and DNA repair. Endonuclease that resolves HJ intermediates. Cleaves cruciform DNA by making single-stranded nicks across the HJ at symmetrical positions within the homologous arms, yielding a 5'-phosphate and a 3'-hydroxyl group; requires a central core of homology in the junction. The consensus cleavage sequence is 5'-(A/T)TT(C/G)-3'. Cleavage occurs on the 3'-side of the TT dinucleotide at the point of strand exchange. HJ branch migration catalyzed by RuvA-RuvB allows RuvC to scan DNA until it finds its consensus sequence, where it cleaves and resolves the cruciform DNA. The protein is Crossover junction endodeoxyribonuclease RuvC of Rubrobacter xylanophilus (strain DSM 9941 / JCM 11954 / NBRC 16129 / PRD-1).